The chain runs to 329 residues: Ribosomal protein L11 methyltransferase (329 aa).

S-adenosyl-L-methionine is bound by residues Thr-177, Gly-198, Asp-220, and Asn-264.

Belongs to the methyltransferase superfamily. PrmA family.

The protein resides in the cytoplasm. It catalyses the reaction L-lysyl-[protein] + 3 S-adenosyl-L-methionine = N(6),N(6),N(6)-trimethyl-L-lysyl-[protein] + 3 S-adenosyl-L-homocysteine + 3 H(+). Its function is as follows. Methylates ribosomal protein L11. The polypeptide is Ribosomal protein L11 methyltransferase (Helicobacter pylori (strain HPAG1)).